A 101-amino-acid chain; its full sequence is NAD(P)H-quinone oxidoreductase subunit 4L, chloroplastic (101 aa).

The next 2 membrane-spanning stretches (helical) occupy residues 2 to 22 (MFEH…YGLI) and 61 to 81 (IFSI…LAIV).

Belongs to the complex I subunit 4L family. NDH is composed of at least 16 different subunits, 5 of which are encoded in the nucleus.

The protein resides in the plastid. The protein localises to the chloroplast thylakoid membrane. The enzyme catalyses a plastoquinone + NADH + (n+1) H(+)(in) = a plastoquinol + NAD(+) + n H(+)(out). The catalysed reaction is a plastoquinone + NADPH + (n+1) H(+)(in) = a plastoquinol + NADP(+) + n H(+)(out). Its function is as follows. NDH shuttles electrons from NAD(P)H:plastoquinone, via FMN and iron-sulfur (Fe-S) centers, to quinones in the photosynthetic chain and possibly in a chloroplast respiratory chain. The immediate electron acceptor for the enzyme in this species is believed to be plastoquinone. Couples the redox reaction to proton translocation, and thus conserves the redox energy in a proton gradient. This Dioscorea elephantipes (Elephant's foot yam) protein is NAD(P)H-quinone oxidoreductase subunit 4L, chloroplastic.